Consider the following 423-residue polypeptide: Histidine--tRNA ligase (423 aa).

The protein belongs to the class-II aminoacyl-tRNA synthetase family. In terms of assembly, homodimer.

Its subcellular location is the cytoplasm. The enzyme catalyses tRNA(His) + L-histidine + ATP = L-histidyl-tRNA(His) + AMP + diphosphate + H(+). In Orientia tsutsugamushi (strain Boryong) (Rickettsia tsutsugamushi), this protein is Histidine--tRNA ligase.